A 621-amino-acid polypeptide reads, in one-letter code: F-box/LRR-repeat protein 4 (621 aa).

Position 28 is an asymmetric dimethylarginine (arginine 28). Positions 277 to 332 (NGYFDKLPYELIQLILNHLTLPDLCRLAQTCKLLSQHCCDPLQYIHLNLQPYWAKL) constitute an F-box domain. 9 LRR repeats span residues 376–397 (ELVR…EVIS), 402–421 (NLQA…AFNH), 427–448 (SLKR…SILN), 452–474 (ELQH…ASMI), 480–501 (KLRT…AELA), 504–524 (CPLL…STGC), 532–558 (LPNL…ACNC), 559–583 (TRLQ…LLES), and 584–609 (CKDL…LNAS).

In terms of assembly, part of a SCF (SKP1-CUL1-F-box) protein ligase complex. Interacts with VCP. Interacts with PPTC7; this interaction promotes destruction of BNIP3 and NIX and mitophagy suppression. In terms of tissue distribution, expressed in heart, kidney, liver, lung, pancreas, and placenta, but not in skeletal muscle.

It localises to the cytoplasm. The protein resides in the nucleus. It is found in the mitochondrion outer membrane. Its function is as follows. Substrate-recognition component of the mitochondria-localized SCF-FBXL4 ubiquitin E3 ligase complex that plays a role in the restriction of mitophagy by controlling the degradation of BNIP3 and NIX mitophagy receptors. Rescues also mitochondrial injury through reverting hyperactivation of DRP1-mediated mitochondrial fission. The chain is F-box/LRR-repeat protein 4 (FBXL4) from Homo sapiens (Human).